We begin with the raw amino-acid sequence, 389 residues long: Glutaryl-CoA dehydrogenase (389 aa).

Substrate is bound by residues Arg-87 and Asn-91. FAD contacts are provided by residues 126–129, Ser-135, and 159–161; these read FGIT and WIS. Substrate is bound at residue Ser-135. Residue Ser-181 participates in substrate binding. Residues Arg-271, 281-284, Arg-340, Ala-344, and 367-371 each bind FAD; these read FQMN and EGSAN. Glu-367 (proton acceptor) is an active-site residue. Arg-385 is a binding site for substrate.

The protein belongs to the acyl-CoA dehydrogenase family. In terms of assembly, homotetramer. It depends on FAD as a cofactor.

It carries out the reaction glutaryl-CoA + A = (2E)-glutaconyl-CoA + AH2. It functions in the pathway aromatic compound metabolism; benzoyl-CoA degradation. Its activity is regulated as follows. Inhibited by glutaconyl-CoA. Functionally, catalyzes the dehydrogenation of Glutaryl-CoA to glutaconyl-CoA. The polypeptide is Glutaryl-CoA dehydrogenase (Acd) (Desulfococcus multivorans).